The sequence spans 689 residues: Methionine--tRNA ligase (689 aa).

The 'HIGH' region signature appears at 15–25; that stretch reads PYANGPIHLGH. C146, C149, C159, and C162 together coordinate Zn(2+). The 'KMSKS' region motif lies at 332–336; sequence KMSKS. K335 lines the ATP pocket. The 102-residue stretch at 588-689 folds into the tRNA-binding domain; that stretch reads DFAKIDLRIA…EGAQPGMRVK (102 aa).

It belongs to the class-I aminoacyl-tRNA synthetase family. MetG type 1 subfamily. In terms of assembly, homodimer. Zn(2+) is required as a cofactor.

The protein resides in the cytoplasm. The enzyme catalyses tRNA(Met) + L-methionine + ATP = L-methionyl-tRNA(Met) + AMP + diphosphate. In terms of biological role, is required not only for elongation of protein synthesis but also for the initiation of all mRNA translation through initiator tRNA(fMet) aminoacylation. The chain is Methionine--tRNA ligase from Shewanella baltica (strain OS155 / ATCC BAA-1091).